Reading from the N-terminus, the 251-residue chain is Endonuclease NucS (251 aa).

A compositionally biased stretch (basic and acidic residues) spans 230 to 240; it reads LEPPKKGNEKR. The disordered stretch occupies residues 230-251; the sequence is LEPPKKGNEKRSKQKTLDFFTP.

The protein belongs to the NucS endonuclease family. As to quaternary structure, homodimer. Interacts with PCNA.

The protein resides in the cytoplasm. Its activity is regulated as follows. Activity is modulated by PCNA. PCNA increases the binding affinity of NucS towards ssDNA as well as branched DNA substrates carrying either 3' or 5' flaps. PCNA is also required for optimal loading of NucS on its substrates and to direct activity towards ss/dsDNA junction. In terms of biological role, cleaves both 3' and 5' ssDNA extremities of branched DNA structures. Binds to ssDNA. In Pyrococcus abyssi (strain GE5 / Orsay), this protein is Endonuclease NucS.